The chain runs to 304 residues: Phosphonates import ATP-binding protein PhnC 1 (304 aa).

In terms of domain architecture, ABC transporter spans V4–S240. Residue G37 to S44 participates in ATP binding. The interval S240–L304 is disordered. Polar residues predominate over residues T263–T272. Residues T289–L304 are compositionally biased toward acidic residues.

This sequence belongs to the ABC transporter superfamily. Phosphonates importer (TC 3.A.1.9.1) family. In terms of assembly, the complex is composed of two ATP-binding proteins (PhnC), two transmembrane proteins (PhnE) and a solute-binding protein (PhnD).

It localises to the cell membrane. The catalysed reaction is phosphonate(out) + ATP + H2O = phosphonate(in) + ADP + phosphate + H(+). Functionally, part of the ABC transporter complex PhnCDE involved in phosphonates import. Responsible for energy coupling to the transport system. The protein is Phosphonates import ATP-binding protein PhnC 1 of Haloquadratum walsbyi (strain DSM 16790 / HBSQ001).